A 335-amino-acid chain; its full sequence is Glyceraldehyde-3-phosphate dehydrogenase (335 aa).

NAD(+)-binding positions include 11–12 and Gly-110; that span reads TI. Residue 139–141 participates in D-glyceraldehyde 3-phosphate binding; the sequence is SCN. Residue Cys-140 is the Nucleophile of the active site. Residue Arg-168 coordinates NAD(+). 194–195 contacts D-glyceraldehyde 3-phosphate; sequence HG. Gln-301 is an NAD(+) binding site.

The protein belongs to the glyceraldehyde-3-phosphate dehydrogenase family. In terms of assembly, homotetramer.

The protein localises to the cytoplasm. It carries out the reaction D-glyceraldehyde 3-phosphate + phosphate + NADP(+) = (2R)-3-phospho-glyceroyl phosphate + NADPH + H(+). It catalyses the reaction D-glyceraldehyde 3-phosphate + phosphate + NAD(+) = (2R)-3-phospho-glyceroyl phosphate + NADH + H(+). Its pathway is carbohydrate degradation; glycolysis; pyruvate from D-glyceraldehyde 3-phosphate: step 1/5. In Halobacterium salinarum (strain ATCC 29341 / DSM 671 / R1), this protein is Glyceraldehyde-3-phosphate dehydrogenase.